Reading from the N-terminus, the 501-residue chain is Aldehyde dehydrogenase, cytosolic 1 (501 aa).

246–251 is a binding site for NAD(+); that stretch reads GSTEVG. Residue glutamate 269 is the Proton acceptor of the active site. The Nucleophile role is filled by cysteine 303.

This sequence belongs to the aldehyde dehydrogenase family. In terms of assembly, homotetramer. In terms of tissue distribution, eye specific, with very high expression in the lens.

It localises to the cytoplasm. It catalyses the reaction an aldehyde + NAD(+) + H2O = a carboxylate + NADH + 2 H(+). The protein operates within alcohol metabolism; ethanol degradation; acetate from ethanol: step 2/2. Its function is as follows. Major component of the eye of elephant shrews, which in contrast to other mammals, possesses both a lens- and a non-lens class-1 aldehyde dehydrogenase 1. This eye-specific form is a structural protein of the lens and, in other part of the eye, serves as the major form of ALDH1. Can convert/oxidize retinaldehyde to retinoic acid. This chain is Aldehyde dehydrogenase, cytosolic 1 (ALDH1), found in Elephantulus edwardii (Cape long-eared elephant shrew).